The primary structure comprises 901 residues: HTH-type transcriptional regulator MalT (901 aa).

39–46 (SPAGYGKT) lines the ATP pocket. Residues 829–894 (ELIRTSPLTQ…DAVQHAQQLL (66 aa)) form the HTH luxR-type domain. The segment at residues 853–872 (NDQIAGELDVAATTIKTHIR) is a DNA-binding region (H-T-H motif).

It belongs to the MalT family. Monomer in solution. Oligomerizes to an active state in the presence of the positive effectors ATP and maltotriose.

With respect to regulation, activated by ATP and maltotriose, which are both required for DNA binding. Functionally, positively regulates the transcription of the maltose regulon whose gene products are responsible for uptake and catabolism of malto-oligosaccharides. Specifically binds to the promoter region of its target genes, recognizing a short DNA motif called the MalT box. This Cronobacter sakazakii (strain ATCC BAA-894) (Enterobacter sakazakii) protein is HTH-type transcriptional regulator MalT.